The chain runs to 891 residues: Protein kinase kin1 (891 aa).

A disordered region spans residues 65-116 (GYISPSSQSPHHGPVRSPSSRKPLPASPSRTRDHSLRVPVSGHSYSADEKPR). Positions 125–395 (YVLGKTIGAG…LEEVLNHPWM (271 aa)) constitute a Protein kinase domain. ATP-binding positions include 131–139 (IGAGSMGKV) and Lys-154. The Proton acceptor role is filled by Asp-266. Thr-528 carries the post-translational modification Phosphothreonine. Disordered stretches follow at residues 528–699 (TPVS…RNNR), 728–747 (TMGNPVDKNSTSPSKSTDKL), and 805–841 (TPTKSTSVHTRRKPSYGSNSTTDSYGSVPDTVPLDDN). 2 stretches are compositionally biased toward low complexity: residues 529-538 (PVSSVPSSPV) and 583-603 (HSPSPSATSSIKKNPSSIFRR). Ser-535 and Ser-536 each carry phosphoserine. Composition is skewed to polar residues over residues 612–629 (KSSTSTLQISAPLETSQS), 649–659 (LVTQSAIGRST), 669–699 (ISSQMDSLNMDSTGPSASNMANAPPSVRNNR), 728–742 (TMGNPVDKNSTSPSK), and 820–829 (YGSNSTTDSY). The region spanning 842-891 (GESPASNLAFEIYIVKVPILSLRGVSFHRISGNSWQYKTLASRILNELKL) is the KA1 domain.

It belongs to the protein kinase superfamily. Ser/Thr protein kinase family.

Its subcellular location is the cytoplasm. It carries out the reaction L-seryl-[protein] + ATP = O-phospho-L-seryl-[protein] + ADP + H(+). It catalyses the reaction L-threonyl-[protein] + ATP = O-phospho-L-threonyl-[protein] + ADP + H(+). Has a role in establishing the characteristic rod cell shape. Important for cell polarity and is involved in directing growth to the cell ends. This is Protein kinase kin1 (kin1) from Schizosaccharomyces pombe (strain 972 / ATCC 24843) (Fission yeast).